Reading from the N-terminus, the 121-residue chain is Large ribosomal subunit protein P2 (121 aa).

Residues 72-99 are compositionally biased toward low complexity; sequence VAVPSGGAPAAATAAAEAPKGGDKAAAP. The segment at 72–121 is disordered; that stretch reads VAVPSGGAPAAATAAAEAPKGGDKAAAPPKEEKKEESEESDADMGFSPFD.

This sequence belongs to the eukaryotic ribosomal protein P1/P2 family. In terms of assembly, P1 and P2 exist as dimers at the large ribosomal subunit. In terms of processing, phosphorylated.

Functionally, plays an important role in the elongation step of protein synthesis. This is Large ribosomal subunit protein P2 from Taenia solium (Pork tapeworm).